Here is a 781-residue protein sequence, read N- to C-terminus: DNA replication helicase (781 aa).

An ATP-binding site is contributed by 64 to 71; it reads GTAGAGKS.

Belongs to the herpesviridae helicase family. In terms of assembly, associates with the primase and the primase-associated factor to form the helicase-primase complex.

It is found in the host nucleus. This protein may be a helicase and is required for replication of viral DNA. In terms of biological role, component of the helicase/primase complex. Unwinds the DNA at the replication forks and generates single-stranded DNA for both leading and lagging strand synthesis. The primase synthesizes short RNA primers on the lagging strand that the polymerase elongates using dNTPs. Possesses helicase-like motifs and therefore may act as the helicase subunit of the complex. This Saimiriine herpesvirus 2 (strain 11) (SaHV-2) protein is DNA replication helicase.